The following is a 419-amino-acid chain: Argininosuccinate synthase (419 aa).

9–17 (AYSGGLDTS) contributes to the ATP binding site. Tyr87 provides a ligand contact to L-citrulline. ATP is bound at residue Gly117. L-aspartate-binding residues include Thr119, Asn123, and Asp124. An L-citrulline-binding site is contributed by Asn123. L-citrulline contacts are provided by Arg127, Ser175, Ser184, Glu260, and Tyr272.

This sequence belongs to the argininosuccinate synthase family. Type 1 subfamily. In terms of assembly, homotetramer.

It is found in the cytoplasm. It carries out the reaction L-citrulline + L-aspartate + ATP = 2-(N(omega)-L-arginino)succinate + AMP + diphosphate + H(+). The protein operates within amino-acid biosynthesis; L-arginine biosynthesis; L-arginine from L-ornithine and carbamoyl phosphate: step 2/3. This is Argininosuccinate synthase from Brevibacillus brevis (strain 47 / JCM 6285 / NBRC 100599).